Consider the following 393-residue polypeptide: Digeranylgeranylglycerophospholipid reductase 2 (393 aa).

FAD contacts are provided by D33, C44, A45, G47, R100, A124, D280, G292, and I293.

This sequence belongs to the geranylgeranyl reductase family. DGGGPL reductase subfamily. The cofactor is FAD.

It carries out the reaction a 2,3-bis-O-phytanyl-sn-glycerol 1-phospholipid + 8 A = a 2,3-bis-O-(geranylgeranyl)-sn-glycerol 1-phospholipid + 8 AH2. The enzyme catalyses 2,3-bis-O-(phytanyl)-sn-glycerol 1-phosphate + 8 A = 2,3-bis-O-(geranylgeranyl)-sn-glycerol 1-phosphate + 8 AH2. It catalyses the reaction CDP-2,3-bis-O-(geranylgeranyl)-sn-glycerol + 8 AH2 = CDP-2,3-bis-O-(phytanyl)-sn-glycerol + 8 A. The catalysed reaction is archaetidylserine + 8 AH2 = 2,3-bis-O-phytanyl-sn-glycero-3-phospho-L-serine + 8 A. The protein operates within membrane lipid metabolism; glycerophospholipid metabolism. In terms of biological role, is involved in the reduction of 2,3-digeranylgeranylglycerophospholipids (unsaturated archaeols) into 2,3-diphytanylglycerophospholipids (saturated archaeols) in the biosynthesis of archaeal membrane lipids. Catalyzes the formation of archaetidic acid (2,3-di-O-phytanyl-sn-glyceryl phosphate) from 2,3-di-O-geranylgeranylglyceryl phosphate (DGGGP) via the hydrogenation of each double bond of the isoprenoid chains. Is also probably able to reduce double bonds of geranyl groups in CDP-2,3-bis-O-(geranylgeranyl)-sn-glycerol and archaetidylserine, thus acting at various stages in the biosynthesis of archaeal membrane lipids. The protein is Digeranylgeranylglycerophospholipid reductase 2 of Methanosphaera stadtmanae (strain ATCC 43021 / DSM 3091 / JCM 11832 / MCB-3).